We begin with the raw amino-acid sequence, 205 residues long: Transmembrane emp24 domain-containing protein A (205 aa).

The first 24 residues, 1 to 24 (MMNNKLLLLVIALLCIASNSIVES), serve as a signal peptide directing secretion. The Lumenal portion of the chain corresponds to 25-172 (FSFKVSAKVE…RNTAESTNSR (148 aa)). The region spanning 34–116 (EECIYEEIGV…DKTVSFILSV (83 aa)) is the GOLD domain. The chain crosses the membrane as a helical span at residues 173 to 193 (VLWWSVFEAFVLIALSIWQIY). Residues 194-205 (YLRRFFEVKRAV) lie on the Cytoplasmic side of the membrane.

It belongs to the EMP24/GP25L family.

It is found in the cytoplasmic vesicle membrane. Its function is as follows. Could have a role in the budding of coatomer-coated and other species of coated vesicles. This is Transmembrane emp24 domain-containing protein A (empA) from Dictyostelium discoideum (Social amoeba).